The following is a 366-amino-acid chain: 3-isopropylmalate dehydrogenase (366 aa).

78–91 is an NAD(+) binding site; the sequence is GPQWTHLKGSESPE. Arg99, Arg109, Arg138, and Asp227 together coordinate substrate. Asp227, Asp251, and Asp255 together coordinate Mg(2+). NAD(+) is bound at residue 285 to 297; that stretch reads GSAPDIAEKNIAN.

The protein belongs to the isocitrate and isopropylmalate dehydrogenases family. LeuB type 1 subfamily. Homodimer. It depends on Mg(2+) as a cofactor. Mn(2+) is required as a cofactor.

The protein localises to the cytoplasm. It carries out the reaction (2R,3S)-3-isopropylmalate + NAD(+) = 4-methyl-2-oxopentanoate + CO2 + NADH. It participates in amino-acid biosynthesis; L-leucine biosynthesis; L-leucine from 3-methyl-2-oxobutanoate: step 3/4. Catalyzes the oxidation of 3-carboxy-2-hydroxy-4-methylpentanoate (3-isopropylmalate) to 3-carboxy-4-methyl-2-oxopentanoate. The product decarboxylates to 4-methyl-2 oxopentanoate. The protein is 3-isopropylmalate dehydrogenase of Blochmanniella pennsylvanica (strain BPEN).